A 462-amino-acid chain; its full sequence is Centrosomal protein of 55 kDa (462 aa).

A compositionally biased stretch (basic and acidic residues) spans 1–11 (MSSRSPKDLIK). Residues 1–26 (MSSRSPKDLIKSKWGSRPSSSKSDTA) form a disordered region. Low complexity predominate over residues 12–23 (SKWGSRPSSSKS). Residues 50 to 400 (KMAEKGRSRL…TQLESLKQLH (351 aa)) adopt a coiled-coil conformation. Residues S96 and S99 each carry the phosphoserine modification. Positions 157–235 (ANCFNSSMNS…EGYLQVEKQK (79 aa)) are interaction with TSG101. Positions 160–214 (FNSSMNSIHEKEMQLKDALEKNQQWLVYDQQREAYVKGLLAKIFELEKRTETAAA) are interaction with PDCD6IP. The required for localization to the interphase centrosome and to the midbody during cytokinesis stretch occupies residues 354–462 (QMQACTLDFE…LLVHVEYCMK (109 aa)). The segment at 410-430 (PLQREPESRVKATSPKSPSAA) is disordered. S423, S426, and S428 each carry phosphoserine. S434 bears the Phosphoserine; by PLK1 mark.

As to quaternary structure, homodimer. Interacts (phosphorylated on Ser-423 and Ser-426) with PLK1; the interaction is indirect via the MTMR3:MTMR4 heterooligomer, occurs during early mitosis, regulates the phosphorylation of CEP55 by PLK1 and its recruitment to the midbody where it can mediate cell abscission. Interacts with AKAP9/CG-NAP; the interaction occurs in interphase and is lost upon mitotic entry. Interacts with PCNT/Kendrin; the interaction occurs in interphase and is lost upon mitotic entry. Directly interacts with PDCD6IP; this interaction is required for PDCD6IP targeting to the midbody; CEP55 binds PDCD6IP in a 2:1 stoichiometry; PDCD6IP competes with TSG101 for the same binding site. Interacts with TSG101; TSG101 competes with PDCD6IP for the same binding site; interaction is required for cytokinesis. Interacts with MVB12A, VPS37B, VPS37C and VPS28. There is a hierachy of phosphorylation, where both Ser-423 and Ser-426 are phosphorylated at the onset of mitosis, prior to Ser-434. Phosphorylation at Ser-423 and Ser-426 is required for dissociation from the centrosome at the G2/M boundary. Phosphorylation at the 3 sites, Ser-423, Ser-426 and Ser-434, is required for protein function at the final stages of cell division to complete cytokinesis successfully.

Its subcellular location is the cytoplasm. It localises to the cytoskeleton. It is found in the microtubule organizing center. The protein localises to the centrosome. The protein resides in the centriole. Its subcellular location is the cleavage furrow. It localises to the midbody. It is found in the midbody ring. Plays a role in mitotic exit and cytokinesis. Recruits PDCD6IP and TSG101 to midbody during cytokinesis. Required for successful completion of cytokinesis. Not required for microtubule nucleation. Plays a role in the development of the brain and kidney. This Mus musculus (Mouse) protein is Centrosomal protein of 55 kDa.